The sequence spans 345 residues: Isopentenyl-diphosphate delta-isomerase (345 aa).

14 to 15 (RK) lines the substrate pocket. FMN contacts are provided by residues S71, 72-74 (SMT), S102, and N130. A substrate-binding site is contributed by 102 to 104 (SMR). Q165 is a binding site for substrate. E166 is a Mg(2+) binding site. FMN-binding positions include K197, T227, 277–279 (GLK), and 298–299 (AG).

This sequence belongs to the IPP isomerase type 2 family. In terms of assembly, homooctamer. Dimer of tetramers. The cofactor is FMN. Requires NADPH as cofactor. Mg(2+) serves as cofactor.

Its subcellular location is the cytoplasm. It catalyses the reaction isopentenyl diphosphate = dimethylallyl diphosphate. Functionally, involved in the biosynthesis of isoprenoids. Catalyzes the 1,3-allylic rearrangement of the homoallylic substrate isopentenyl (IPP) to its allylic isomer, dimethylallyl diphosphate (DMAPP). The protein is Isopentenyl-diphosphate delta-isomerase of Rickettsia felis (strain ATCC VR-1525 / URRWXCal2) (Rickettsia azadi).